A 617-amino-acid chain; its full sequence is Probable endochitinase (617 aa).

The GH18 domain maps to 53 to 426; that stretch reads YIRPCYFTNW…SVIAKELGGV (374 aa). C57 and C82 are joined by a disulfide. Residues 109-110 and 136-139 each bind chitin; these read DW and GGWS. E179 serves as the catalytic Proton donor. Residues Y180 and 245–248 contribute to the chitin site; that span reads MSYD. N-linked (GlcNAc...) asparagine glycosylation is present at N310. W394 is a binding site for chitin. Chitin-binding type-2 domains follow at residues 478–534 and 563–617; these read TNVC…GCSV and AFKC…KCAK. 2 disulfides stabilise this stretch: C511-C524 and C594-C607.

The protein belongs to the glycosyl hydrolase 18 family. Chitinase class II subfamily.

It catalyses the reaction Random endo-hydrolysis of N-acetyl-beta-D-glucosaminide (1-&gt;4)-beta-linkages in chitin and chitodextrins.. The chain is Probable endochitinase (cht-1) from Caenorhabditis elegans.